The chain runs to 291 residues: ATP synthase gamma chain (291 aa).

This sequence belongs to the ATPase gamma chain family. F-type ATPases have 2 components, CF(1) - the catalytic core - and CF(0) - the membrane proton channel. CF(1) has five subunits: alpha(3), beta(3), gamma(1), delta(1), epsilon(1). CF(0) has three main subunits: a, b and c.

Its subcellular location is the cell inner membrane. Its function is as follows. Produces ATP from ADP in the presence of a proton gradient across the membrane. The gamma chain is believed to be important in regulating ATPase activity and the flow of protons through the CF(0) complex. The chain is ATP synthase gamma chain from Roseobacter denitrificans (strain ATCC 33942 / OCh 114) (Erythrobacter sp. (strain OCh 114)).